The primary structure comprises 76 residues: Protein CsbA (76 aa).

The Extracellular portion of the chain corresponds to 1–5 (MITKA). Residues 6–22 (VFALFFPFMLVVLFTRV) form a helical membrane-spanning segment. Over 23–27 (TFNHY) the chain is Cytoplasmic. The helical transmembrane segment at 28 to 44 (VAIALTAALLFASYLKG) threads the bilayer. Residues 45 to 49 (YTETY) are Extracellular-facing. The chain crosses the membrane as a helical span at residues 50-66 (FIVGLDVVSLVAGGLYM). Residues 67–76 (AKKAAEKKEE) are Cytoplasmic-facing.

The protein localises to the cell membrane. The sequence is that of Protein CsbA (csbA) from Bacillus subtilis (strain 168).